We begin with the raw amino-acid sequence, 314 residues long: Dihydroorotate dehydrogenase (fumarate) (314 aa).

Substrate is bound by residues lysine 46, 70-74 (NSMGL), and asparagine 130. Lysine 46 participates in a covalent cross-link: Glycyl lysine isopeptide (Lys-Gly) (interchain with G-Cter in ubiquitin). 46 to 47 (KS) serves as a coordination point for FMN. FMN is bound at residue asparagine 130. The Nucleophile role is filled by cysteine 133. Lysine 167 and isoleucine 195 together coordinate FMN. 196–197 (NS) is a substrate binding site. Residues glycine 224, 252–253 (GG), and 274–275 (GT) contribute to the FMN site.

The protein belongs to the dihydroorotate dehydrogenase family. Type 1 subfamily. In terms of assembly, homodimer. FMN serves as cofactor.

The protein resides in the cytoplasm. It carries out the reaction (S)-dihydroorotate + fumarate = orotate + succinate. It participates in pyrimidine metabolism; UMP biosynthesis via de novo pathway. With respect to regulation, the activity is independent of the presence of oxygen. Catalyzes the conversion of dihydroorotate to orotate with fumarate as the electron acceptor. Molecular oxygen can replace fumarate in vitro. Does not use oxaloacetate or NAD or NADP as electron acceptors. This chain is Dihydroorotate dehydrogenase (fumarate) (URA1), found in Saccharomyces cerevisiae (strain ATCC 204508 / S288c) (Baker's yeast).